The primary structure comprises 382 residues: Serine/threonine-protein phosphatase 2A activator 2 (382 aa).

Residues 363 to 382 (SHKGVPTLGNRPGIKPIPFD) form a disordered region.

This sequence belongs to the PTPA-type PPIase family.

It is found in the cytoplasm. The catalysed reaction is [protein]-peptidylproline (omega=180) = [protein]-peptidylproline (omega=0). PPIases accelerate the folding of proteins. It catalyzes the cis-trans isomerization of proline imidic peptide bonds in oligopeptides. Acts as a regulatory subunit for PP2A-like phosphatases modulating their activity or substrate specificity, probably by inducing a conformational change in the catalytic subunit, a direct target of the PPIase. Can reactivate inactive phosphatase PP2A-phosphatase methylesterase complexes (PP2Ai) in presence of ATP and Mg(2+) by dissociating the inactive form from the complex. The polypeptide is Serine/threonine-protein phosphatase 2A activator 2 (RRD2) (Cryptococcus neoformans var. neoformans serotype D (strain B-3501A) (Filobasidiella neoformans)).